Reading from the N-terminus, the 500-residue chain is Cytochrome P450 71B36 (500 aa).

The helical transmembrane segment at 1-21 threads the bilayer; sequence MATILFLSLLFLSCILLAAFT. Cysteine 440 is a heme binding site.

It belongs to the cytochrome P450 family. Heme is required as a cofactor.

Its subcellular location is the membrane. This is Cytochrome P450 71B36 (CYP71B36) from Arabidopsis thaliana (Mouse-ear cress).